The primary structure comprises 198 residues: Nucleoside triphosphate pyrophosphatase (198 aa).

Aspartate 70 acts as the Proton acceptor in catalysis.

The protein belongs to the Maf family. Requires a divalent metal cation as cofactor.

The protein localises to the cytoplasm. The enzyme catalyses a ribonucleoside 5'-triphosphate + H2O = a ribonucleoside 5'-phosphate + diphosphate + H(+). It carries out the reaction a 2'-deoxyribonucleoside 5'-triphosphate + H2O = a 2'-deoxyribonucleoside 5'-phosphate + diphosphate + H(+). Nucleoside triphosphate pyrophosphatase. May have a dual role in cell division arrest and in preventing the incorporation of modified nucleotides into cellular nucleic acids. The sequence is that of Nucleoside triphosphate pyrophosphatase from Thermosynechococcus vestitus (strain NIES-2133 / IAM M-273 / BP-1).